The sequence spans 637 residues: ATP-dependent zinc metalloprotease FtsH (637 aa).

Residues 1–6 (MNNQGR) are Cytoplasmic-facing. The chain crosses the membrane as a helical span at residues 7–27 (SILAWATLFIFVILLFNVFQS). Over 28–103 (DSLLGGRNNI…VVPLETRMNT (76 aa)) the chain is Periplasmic. Residues 104-124 (FLGFLISWFPMLLLIGVWVFF) traverse the membrane as a helical segment. Residues 125–637 (MRQMHGGGKA…TKAKKENYAS (513 aa)) are Cytoplasmic-facing. An ATP-binding site is contributed by 195 to 202 (GPPGTGKT). Histidine 417 provides a ligand contact to Zn(2+). Glutamate 418 is a catalytic residue. Residues histidine 421 and aspartate 495 each coordinate Zn(2+). The segment at 603–637 (ENKFPFNDSSTIKIDKEKSPEKTKTTKAKKENYAS) is disordered. Residues 615–637 (KIDKEKSPEKTKTTKAKKENYAS) are compositionally biased toward basic and acidic residues.

This sequence in the central section; belongs to the AAA ATPase family. In the C-terminal section; belongs to the peptidase M41 family. As to quaternary structure, homohexamer. Zn(2+) is required as a cofactor.

It localises to the cell inner membrane. Its function is as follows. Acts as a processive, ATP-dependent zinc metallopeptidase for both cytoplasmic and membrane proteins. Plays a role in the quality control of integral membrane proteins. This chain is ATP-dependent zinc metalloprotease FtsH, found in Rickettsia conorii (strain ATCC VR-613 / Malish 7).